The chain runs to 122 residues: Large ribosomal subunit protein uL14 (122 aa).

The protein belongs to the universal ribosomal protein uL14 family. As to quaternary structure, part of the 50S ribosomal subunit. Forms a cluster with proteins L3 and L19. In the 70S ribosome, L14 and L19 interact and together make contacts with the 16S rRNA in bridges B5 and B8.

Functionally, binds to 23S rRNA. Forms part of two intersubunit bridges in the 70S ribosome. This Bordetella parapertussis (strain 12822 / ATCC BAA-587 / NCTC 13253) protein is Large ribosomal subunit protein uL14.